Reading from the N-terminus, the 222-residue chain is Uridine diphosphate glucose pyrophosphatase NUDT14 (222 aa).

One can recognise a Nudix hydrolase domain in the interval 38–206; it reads KTHDSVTVLL…DIPKTLGVIF (169 aa). The Nudix box signature appears at 111–129; it reads PGLSLEEVACKEAWEECGY.

This sequence belongs to the Nudix hydrolase family. Homodimer. Mg(2+) is required as a cofactor.

Its subcellular location is the cytoplasm. The enzyme catalyses UDP-sugar + H2O = UMP + alpha-D-aldose 1-phosphate.. In terms of biological role, hydrolyzes UDP-glucose to glucose 1-phosphate and UMP and ADP-ribose to ribose 5-phosphate and AMP. The physiological substrate is probably UDP-glucose. Poor activity on other substrates such as ADP-glucose, CDP-glucose, GDP-glucose and GDP-mannose. The chain is Uridine diphosphate glucose pyrophosphatase NUDT14 (NUDT14) from Homo sapiens (Human).